Reading from the N-terminus, the 1120-residue chain is Cluster 41 polyketide synthase (1120 aa).

The 424-residue stretch at 7-430 folds into the Ketosynthase family 3 (KS3) domain; the sequence is PHDVAVVGMG…GTVSHAIIEK (424 aa). Catalysis depends on for beta-ketoacyl synthase activity residues cysteine 178, histidine 313, and histidine 353. Residues 539 to 796 form a malonyl-CoA:ACP transacylase (MAT) domain region; sequence VWVFSGHGAQ…TSAISAAAED (258 aa). The For acyl/malonyl transferase activity role is filled by serine 625. The tract at residues 804 to 943 is ketoreductase (KR) domain; it reads IKKILSMESR…IAMQWTSWRE (140 aa). The Carrier domain maps to 1042–1116; the sequence is DSLSRQVREC…HIVKWLMEKT (75 aa). Position 1076 is an O-(pantetheine 4'-phosphoryl)serine (serine 1076).

Functionally, polyketide synthase; part of the gene cluster 41 that mediates the biosynthesis of an extracellular and diffusible metabolite that is able to stimulate colony sclerotial production. The polypeptide is Cluster 41 polyketide synthase (Aspergillus flavus (strain ATCC 200026 / FGSC A1120 / IAM 13836 / NRRL 3357 / JCM 12722 / SRRC 167)).